A 500-amino-acid polypeptide reads, in one-letter code: Melanopsin-like (500 aa).

Residues 1 to 65 are Extracellular-facing; sequence MSHHSSWRGH…TVDVPDHAHY (65 aa). N-linked (GlcNAc...) asparagine glycosylation is present at asparagine 18. The chain crosses the membrane as a helical span at residues 66–86; the sequence is IIGSVILIVGITGVIGNALVV. Residues 87–101 are Cytoplasmic-facing; the sequence is YVFCRSRTLRTAGNM. The helical transmembrane segment at 102 to 122 threads the bilayer; that stretch reads FIVNLAVADFLMSVTQSPVFF. Residues 123 to 138 are Extracellular-facing; the sequence is AASLHRRWVFGERPCE. A disulfide bridge links cysteine 137 with cysteine 215. Residues 139-159 form a helical membrane-spanning segment; it reads LYAFCGALFGICSMMTLTAIA. At 160–182 the chain is on the cytoplasmic side; it reads ADRCLAITQPLALVSRVSRRKAG. A helical membrane pass occupies residues 183–203; that stretch reads AVLVVVWLYSLGWSLPPFFGW. The Extracellular segment spans residues 204–232; the sequence is SAYVPEGLQTSCSWDYMTFTPSVRAYTIL. Residues 233 to 253 traverse the membrane as a helical segment; the sequence is LFVFVFFIPLGIIGSCYFAIF. Topologically, residues 254-286 are cytoplasmic; sequence QTIRAAGKEIRELDCGETHKVYERMQNEWKMAK. The chain crosses the membrane as a helical span at residues 287-307; that stretch reads VALVVIVLFIISWSPYSVVAL. Topologically, residues 308-322 are extracellular; it reads TATAGYSHFLTPYMN. Residues 323-343 form a helical membrane-spanning segment; the sequence is SVPAVIAKASAIHNPIIYAIT. Lysine 330 bears the N6-(retinylidene)lysine mark. Residues 344–500 are Cytoplasmic-facing; sequence HPKYRVAIAR…SDGKALLGGN (157 aa). Positions 404 to 428 are disordered; the sequence is RWGKTRLSSASDSDSCWTESEADGS. Polar residues predominate over residues 409-428; the sequence is RLSSASDSDSCWTESEADGS.

This sequence belongs to the G-protein coupled receptor 1 family. Opsin subfamily. In terms of tissue distribution, expressed in a subset of retinal horizontal cells.

Its subcellular location is the cell membrane. Photoreceptor implicated in non-image-forming responses to light. The chain is Melanopsin-like (opn4l) from Danio rerio (Zebrafish).